The chain runs to 154 residues: Ribosome maturation factor RimP (154 aa).

The protein belongs to the RimP family.

The protein resides in the cytoplasm. Its function is as follows. Required for maturation of 30S ribosomal subunits. The polypeptide is Ribosome maturation factor RimP (Clostridium novyi (strain NT)).